A 337-amino-acid chain; its full sequence is uncharacterized protein (337 aa).

2 consecutive transmembrane segments (helical) span residues 4-24 and 26-46; these read FIFF…FSLI and LLLW…LFAL.

It belongs to the plectrovirus ORF2 family.

It is found in the host membrane. This is an uncharacterized protein from Spiroplasma melliferum (SpV1).